The chain runs to 39 residues: Potassium channel toxin alpha-KTx 2.24 (39 aa).

3 cysteine pairs are disulfide-bonded: Cys7/Cys29, Cys13/Cys34, and Cys17/Cys36.

It belongs to the short scorpion toxin superfamily. Potassium channel inhibitor family. Alpha-KTx 02 subfamily. In terms of tissue distribution, expressed by the venom gland.

The protein localises to the secreted. Functionally, blocks human voltage-gated potassium (Kv) channels Kv1.1/KCNA, Kv1.2/KCNA2 and Kv1.3/KCNA3. Exhibits high affinity for Kv1.2/KCNA2 and selectivity over Kv1.1/KCNA and Kv1.3/KCNA3. In Centruroides bonito (Scorpion), this protein is Potassium channel toxin alpha-KTx 2.24.